We begin with the raw amino-acid sequence, 371 residues long: Opsin Rh1 (371 aa).

The Extracellular segment spans residues 1–47; it reads MERYSTPLIGPSFAALTNGSVTDKVTPDMAHLVHPYWNQFPAMEPKW. Asn-18 is a glycosylation site (N-linked (GlcNAc...) asparagine). The chain crosses the membrane as a helical span at residues 48 to 72; the sequence is AKFLAAYMVLIATISWCGNGVVIYI. Over 73-84 the chain is Cytoplasmic; that stretch reads FSTTKSLRTPAN. The chain crosses the membrane as a helical span at residues 85 to 110; that stretch reads LLVINLAISDFGIMITNTPMMGINLF. Residues 111-124 are Extracellular-facing; that stretch reads YETWVLGPLMCDIY. A disulfide bridge links Cys-121 with Cys-198. The helical transmembrane segment at 125 to 144 threads the bilayer; sequence GGLGSAFGCSSILSMCMISL. Residues 145–163 are Cytoplasmic-facing; sequence DRYNVIVKGMAGQPMTIKL. A helical transmembrane segment spans residues 164-187; that stretch reads AIMKIALIWFMASIWTLAPVFGWS. Over 188-211 the chain is Extracellular; sequence RYVPEGNLTSCGIDYLERDWNPRS. A helical membrane pass occupies residues 212–239; the sequence is YLIFYSIFVYYLPLFLICYSYWFIIAAV. Over 240-274 the chain is Cytoplasmic; it reads SAHEKAMREQAKKMNVKSLRSSEDADKSAEGKLAK. A helical membrane pass occupies residues 275-298; it reads VALVTISLWFMAWTPYTIINTLGL. At 299 to 305 the chain is on the extracellular side; that stretch reads FKYEGLT. A helical transmembrane segment spans residues 306–330; sequence PLNTIWGACFAKSAACYNPIVYGIS. Lys-317 bears the N6-(retinylidene)lysine mark. Topologically, residues 331 to 371 are cytoplasmic; the sequence is HPKYGIALKEKCPCCVFGKVDDGKASDATSQATNNESETKA.

It belongs to the G-protein coupled receptor 1 family. Opsin subfamily. Phosphorylated on some or all of the serine and threonine residues present in the C-terminal region.

Its subcellular location is the cell projection. It localises to the rhabdomere membrane. Visual pigments are the light-absorbing molecules that mediate vision. They consist of an apoprotein, opsin, covalently linked to cis-retinal. This is Opsin Rh1 (NINAE) from Calliphora vicina (Blue blowfly).